A 919-amino-acid polypeptide reads, in one-letter code: MKIRNYIIIAISVILLVVFSLSRTLVHLLTEAWWFNTVDFANIFWTRLNWQIFLWVGAFVIYFLFLWSNYWIAEKLTSDRSFNILLGTELAPYRNIFVKIIFLVNITLISLSAATATSPAWETFLKFLNAVDFPNQDPIYQRNIGFYIFRLPLYEGIKEWLFTLVFAGLIISIIVYALKGKFTAGRQWQNFLTGSIKTHISLLLAGVTILIAVGFWFERYELLFDSNGVVFGAGYTDVHAKLFAYWAMAIVALLLAVVCVLSVWKNNIIWPTYGIVIYIVLLGLFNVLYPWFQQKFIVNPNELQKEKPYIANNIKFTREAYGLDNVETKSFPAKFELDSQTLKNNQGTVRNITLWDYRPLLSTYRQLQEMRLYYQFNDVDIDRYTIDGNYRQVMLSPREMVYSQVPRKAQTWVNKHLKYTHGYGLVMNPVNEVKADGLPVLFIKDIPPVSQVNLQVKEPAIYYGEKTDTHIFTGMSTEEFDYPRSGENAFTFYSGTGGVPVNSLWRKLAYAYDLSSINILISGYFTDNSKIHYYRNIKERVNQVAPFLRFDNDPYIALIDGKIQWILDAYTVSDRYPYSEPLYLSNNARAILNRGNIERIARGNVNYIRNSVKVMVDAYNGTMKFFVVDENDPVLNTYRKIFPQLFTEKSAIPTNVKAHFRYPLDLFKIKAQMYLSYHMSNPQLFYNQEDLWRFPTEVYEDNKQLMEPYYLIMRLPEKKGEEFVLILPFTPVNKDNMIAWMAAESDGDNYGKLLLYEFPKQKLVYGPSQIEARIDQNPKISQQLTLWSQKGSKVIRGDLLVIPIEESLMYIEPIYLRAEQGELPELKRVIVAYDKEVVMTETLSKSLETIFGMEVKQPEVKVTEKTPETKNISELINSIVEAYSQTEAARRKDNWVEYGKSKQKFEQLLQQLKKQTESN.

The next 7 membrane-spanning stretches (helical) occupy residues tyrosine 6–valine 26, isoleucine 52–isoleucine 72, isoleucine 96–alanine 116, tryptophan 160–glycine 180, threonine 198–glutamate 218, phenylalanine 243–valine 263, and isoleucine 268–leucine 288.

Belongs to the UPF0182 family.

The protein localises to the cell membrane. This chain is UPF0182 protein Tery_4385, found in Trichodesmium erythraeum (strain IMS101).